Here is a 461-residue protein sequence, read N- to C-terminus: Glycine--tRNA ligase (461 aa).

Residues R100 and E163 each contribute to the substrate site. ATP is bound by residues 195-197, 205-210, 282-283, and 326-329; these read RNE, FRTREF, EL, and GLGR. A substrate-binding site is contributed by 210–214; it reads FEQME. A substrate-binding site is contributed by 322 to 326; sequence EPAAG.

Belongs to the class-II aminoacyl-tRNA synthetase family. In terms of assembly, homodimer.

The protein resides in the cytoplasm. It carries out the reaction tRNA(Gly) + glycine + ATP = glycyl-tRNA(Gly) + AMP + diphosphate. In terms of biological role, catalyzes the attachment of glycine to tRNA(Gly). In Corynebacterium glutamicum (strain ATCC 13032 / DSM 20300 / JCM 1318 / BCRC 11384 / CCUG 27702 / LMG 3730 / NBRC 12168 / NCIMB 10025 / NRRL B-2784 / 534), this protein is Glycine--tRNA ligase.